A 289-amino-acid polypeptide reads, in one-letter code: Protease HtpX homolog (289 aa).

Transmembrane regions (helical) follow at residues 11–31 and 36–54; these read AALF…IGAG and APIW…YGYW. H138 serves as a coordination point for Zn(2+). E139 is a catalytic residue. A Zn(2+)-binding site is contributed by H142. The next 2 membrane-spanning stretches (helical) occupy residues 153 to 173 and 182 to 202; these read VAAA…FFGG and LAMI…QMAI. E207 provides a ligand contact to Zn(2+).

It belongs to the peptidase M48B family. Zn(2+) is required as a cofactor.

It is found in the cell membrane. This chain is Protease HtpX homolog, found in Pseudarthrobacter chlorophenolicus (strain ATCC 700700 / DSM 12829 / CIP 107037 / JCM 12360 / KCTC 9906 / NCIMB 13794 / A6) (Arthrobacter chlorophenolicus).